The following is a 438-amino-acid chain: 5-methylthioadenosine/S-adenosylhomocysteine deaminase (438 aa).

The Zn(2+) site is built by histidine 66 and histidine 68. 3 residues coordinate substrate: glutamate 95, arginine 148, and histidine 188. Residue histidine 215 participates in Zn(2+) binding. Residues glutamate 218 and aspartate 305 each coordinate substrate. Residue aspartate 305 coordinates Zn(2+).

This sequence belongs to the metallo-dependent hydrolases superfamily. MTA/SAH deaminase family. Zn(2+) serves as cofactor.

The enzyme catalyses S-adenosyl-L-homocysteine + H2O + H(+) = S-inosyl-L-homocysteine + NH4(+). It catalyses the reaction S-methyl-5'-thioadenosine + H2O + H(+) = S-methyl-5'-thioinosine + NH4(+). Catalyzes the deamination of 5-methylthioadenosine and S-adenosyl-L-homocysteine into 5-methylthioinosine and S-inosyl-L-homocysteine, respectively. Is also able to deaminate adenosine. The protein is 5-methylthioadenosine/S-adenosylhomocysteine deaminase of Halalkalibacterium halodurans (strain ATCC BAA-125 / DSM 18197 / FERM 7344 / JCM 9153 / C-125) (Bacillus halodurans).